The sequence spans 553 residues: Protein DA1-related 1 (553 aa).

A disordered region spans residues 10 to 41; the sequence is GSSHKFSDGQCNGRYREDRNLEGPRYSAEGSD. Residues 42-61 enclose the UIM 1 domain; that stretch reads FDKEEIECAIALSLSEQEHV. The span at 62 to 77 shows a compositional bias: basic and acidic residues; the sequence is IPQDDKGKKIIEYKSE. Residues 62 to 91 form a disordered region; the sequence is IPQDDKGKKIIEYKSETEEDDDDDEDEDEE. The span at 78–91 shows a compositional bias: acidic residues; sequence TEEDDDDDEDEDEE. The UIM 2 domain occupies 87-106; it reads DEDEEYMRAQLEAAEEEERR. The UIM 3; degenerate domain occupies 122–141; that stretch reads AQLEETEKLLAKARLEEEEM. The region spanning 149-168 is the UIM 4 domain; the sequence is EEDELLAKALQESMNVGSPP. At Ser166 the chain carries Phosphoserine. The LIM zinc-binding domain occupies 188 to 248; sequence RICVGCQAEI…KLCYKEQHHP (61 aa).

Interacts with ubiquitin, TCP14 and TCP15. Polyubiquitinated by DA2.

Acts redundantly with DA1 and DAR2 to regulate endoreduplication during leaf development. Together with DA1 and DAR2, modulates the protein stability of the transcription factors TCP14 and TCP15, which repress endoreduplication by directly regulating the expression of cell-cycle genes. This Arabidopsis thaliana (Mouse-ear cress) protein is Protein DA1-related 1.